A 346-amino-acid chain; its full sequence is Phosphate acyltransferase (346 aa).

It belongs to the PlsX family. Homodimer. Probably interacts with PlsY.

Its subcellular location is the cytoplasm. The catalysed reaction is a fatty acyl-[ACP] + phosphate = an acyl phosphate + holo-[ACP]. Its pathway is lipid metabolism; phospholipid metabolism. In terms of biological role, catalyzes the reversible formation of acyl-phosphate (acyl-PO(4)) from acyl-[acyl-carrier-protein] (acyl-ACP). This enzyme utilizes acyl-ACP as fatty acyl donor, but not acyl-CoA. The sequence is that of Phosphate acyltransferase from Deinococcus geothermalis (strain DSM 11300 / CIP 105573 / AG-3a).